The chain runs to 197 residues: uncharacterized protein (197 aa).

6 helical membrane-spanning segments follow: residues 11–31, 50–70, 79–99, 108–128, 136–156, and 158–178; these read AAMV…IPLI, ILAI…AYLG, AIVA…GLFA, AIVA…LGIM, ALKG…FIGL, and TLQI…AFHF.

This sequence belongs to the chromate ion transporter (CHR) (TC 2.A.51) family.

The protein localises to the cell membrane. This is an uncharacterized protein from Bacillus subtilis (strain 168).